The chain runs to 295 residues: GTPase Era (295 aa).

In terms of domain architecture, Era-type G spans 7-176 (KTVSVCIIGR…ITSKAKIAPW (170 aa)). Residues 15–22 (GRPNSGKS) are G1. 15 to 22 (GRPNSGKS) lines the GTP pocket. The G2 stretch occupies residues 41 to 45 (QTTRS). Residues 62 to 65 (DTPG) form a G3 region. GTP contacts are provided by residues 62–66 (DTPGI) and 124–127 (NKID). A G4 region spans residues 124 to 127 (NKID). The interval 152–154 (ISA) is G5. Positions 204–281 (LQQELPYKLT…HLFLFVKVQE (78 aa)) constitute a KH type-2 domain.

The protein belongs to the TRAFAC class TrmE-Era-EngA-EngB-Septin-like GTPase superfamily. Era GTPase family. In terms of assembly, monomer.

The protein resides in the cytoplasm. The protein localises to the cell inner membrane. In terms of biological role, an essential GTPase that binds both GDP and GTP, with rapid nucleotide exchange. Plays a role in 16S rRNA processing and 30S ribosomal subunit biogenesis and possibly also in cell cycle regulation and energy metabolism. The protein is GTPase Era of Rickettsia bellii (strain RML369-C).